A 99-amino-acid polypeptide reads, in one-letter code: Single insulin-like growth factor-binding domain protein-2 (99 aa).

A signal peptide spans 1 to 18; that stretch reads MESLFIFAFGMMLSSASA. Residues 19-98 enclose the IGFBP N-terminal domain; the sequence is LSCIPCVPEE…GQEVGRCRKK (80 aa). A glycan (O-linked (GalNAc...) serine) is linked at serine 20. Disulfide bonds link cysteine 21-cysteine 44, cysteine 24-cysteine 46, cysteine 29-cysteine 47, cysteine 35-cysteine 50, cysteine 58-cysteine 74, and cysteine 68-cysteine 95.

Expressed in hemocytes.

The protein localises to the secreted. Functionally, has a role in the innate immune system. This chain is Single insulin-like growth factor-binding domain protein-2, found in Cupiennius salei (American wandering spider).